The sequence spans 634 residues: ATP-dependent clpX-like chaperone, mitochondrial (634 aa).

A mitochondrion-targeting transit peptide spans 1 to 56 (MSSCGACTCGAAAARLLTTSLTSAQRGISCGRIHVPVLGRLGTTLDAQALRRAPLR). The disordered stretch occupies residues 69–102 (DGANKDGSGDGNKKSVTEGSSKKSGSGNSGKGGN). The span at 70 to 84 (GANKDGSGDGNKKSV) shows a compositional bias: basic and acidic residues. The span at 85–94 (TEGSSKKSGS) shows a compositional bias: low complexity. The region spanning 94-147 (SGNSGKGGNQLRCPKCGDLCTHVETFVSSTRFVKCEKCHHFFVVLSEADSKKSI) is the ClpX-type ZB domain. Zn(2+) contacts are provided by Cys106, Cys109, Cys128, and Cys131. Position 295 to 302 (295 to 302 (PTGSGKTL)) interacts with ATP. Lys438 is subject to N6-acetyllysine. Positions 599 to 611 (KEPGYIRAPSKES) are enriched in basic and acidic residues. The segment at 599–634 (KEPGYIRAPSKESSEEEYDSGVEEDGWPRQADAANS) is disordered. Residues 612–623 (SEEEYDSGVEED) show a composition bias toward acidic residues. Residue Ser618 is modified to Phosphoserine.

The protein belongs to the ClpX chaperone family. Homohexamer that forms a ring structure; this hexamerization requires ATP binding. Component of the ClpXP complex formed by the assembly of two CLPP heptameric rings with two CLPX hexameric rings, giving rise to a symmetrical structure with two central CLPP rings flanked by a CLPX ring at either end of the complex. Interacts with TFAM. Detected in liver (at protein level).

Its subcellular location is the mitochondrion. The protein localises to the mitochondrion matrix. It is found in the mitochondrion nucleoid. It catalyses the reaction ATP + H2O = ADP + phosphate + H(+). In terms of biological role, ATP-dependent chaperone that functions as an unfoldase. As part of the ClpXP protease complex, it recognizes specific protein substrates, unfolds them using energy derived from ATP hydrolysis, and then translocates them to the proteolytic subunit (CLPP) of the ClpXP complex for degradation. Thanks to its chaperone activity, it also functions in the incorporation of the pyridoxal phosphate cofactor into 5-aminolevulinate synthase, thereby activating 5-aminolevulinate (ALA) synthesis, the first step in heme biosynthesis. This chaperone is also involved in the control of mtDNA nucleoid distribution, by regulating mitochondrial transcription factor A (TFAM) activity. The polypeptide is ATP-dependent clpX-like chaperone, mitochondrial (Mus musculus (Mouse)).